Here is a 191-residue protein sequence, read N- to C-terminus: Orotate phosphoribosyltransferase (191 aa).

Position 114-122 (114-122 (EDVVTTGKS)) interacts with 5-phospho-alpha-D-ribose 1-diphosphate. Orotate contacts are provided by threonine 118 and arginine 146.

This sequence belongs to the purine/pyrimidine phosphoribosyltransferase family. PyrE subfamily. In terms of assembly, homodimer. It depends on Mg(2+) as a cofactor.

It carries out the reaction orotidine 5'-phosphate + diphosphate = orotate + 5-phospho-alpha-D-ribose 1-diphosphate. It participates in pyrimidine metabolism; UMP biosynthesis via de novo pathway; UMP from orotate: step 1/2. In terms of biological role, catalyzes the transfer of a ribosyl phosphate group from 5-phosphoribose 1-diphosphate to orotate, leading to the formation of orotidine monophosphate (OMP). The protein is Orotate phosphoribosyltransferase of Clostridium botulinum (strain Loch Maree / Type A3).